The following is a 250-amino-acid chain: Adenosylcobinamide-GDP ribazoletransferase (250 aa).

The next 6 helical transmembrane spans lie at 31 to 51 (ISYL…VYFV), 55 to 75 (FILG…ITGA), 106 to 126 (VGTN…AVLN), 133 to 153 (IIIA…LLMC), 187 to 207 (IGYV…VLFI), and 230 to 250 (NEIA…CGLL).

It belongs to the CobS family. Mg(2+) serves as cofactor.

It localises to the cell membrane. The catalysed reaction is alpha-ribazole + adenosylcob(III)inamide-GDP = adenosylcob(III)alamin + GMP + H(+). It catalyses the reaction alpha-ribazole 5'-phosphate + adenosylcob(III)inamide-GDP = adenosylcob(III)alamin 5'-phosphate + GMP + H(+). It participates in cofactor biosynthesis; adenosylcobalamin biosynthesis; adenosylcobalamin from cob(II)yrinate a,c-diamide: step 7/7. Its function is as follows. Joins adenosylcobinamide-GDP and alpha-ribazole to generate adenosylcobalamin (Ado-cobalamin). Also synthesizes adenosylcobalamin 5'-phosphate from adenosylcobinamide-GDP and alpha-ribazole 5'-phosphate. This is Adenosylcobinamide-GDP ribazoletransferase from Clostridium novyi (strain NT).